Here is a 423-residue protein sequence, read N- to C-terminus: Serine--tRNA ligase (423 aa).

Residue 231 to 233 (TGE) participates in L-serine binding. Residue 262-264 (RQE) coordinates ATP. E285 serves as a coordination point for L-serine. 349-352 (EISS) contributes to the ATP binding site. L-serine is bound at residue S385.

This sequence belongs to the class-II aminoacyl-tRNA synthetase family. Type-1 seryl-tRNA synthetase subfamily. Homodimer. The tRNA molecule binds across the dimer.

It localises to the cytoplasm. It carries out the reaction tRNA(Ser) + L-serine + ATP = L-seryl-tRNA(Ser) + AMP + diphosphate + H(+). The enzyme catalyses tRNA(Sec) + L-serine + ATP = L-seryl-tRNA(Sec) + AMP + diphosphate + H(+). The protein operates within aminoacyl-tRNA biosynthesis; selenocysteinyl-tRNA(Sec) biosynthesis; L-seryl-tRNA(Sec) from L-serine and tRNA(Sec): step 1/1. Its function is as follows. Catalyzes the attachment of serine to tRNA(Ser). Is also able to aminoacylate tRNA(Sec) with serine, to form the misacylated tRNA L-seryl-tRNA(Sec), which will be further converted into selenocysteinyl-tRNA(Sec). The protein is Serine--tRNA ligase of Phytoplasma mali (strain AT).